Here is a 149-residue protein sequence, read N- to C-terminus: Probable flagellum biosynthesis repressor protein FlbT (149 aa).

This sequence belongs to the FlbT family.

In terms of biological role, has a post-transcriptional repressor function in flagellum biogenesis. Associates with the 5'-UTR of fljK mRNA and promotes its degradation. This Sinorhizobium medicae (strain WSM419) (Ensifer medicae) protein is Probable flagellum biosynthesis repressor protein FlbT.